The chain runs to 520 residues: Laccase-2 (520 aa).

An N-terminal signal peptide occupies residues 1–19; the sequence is MRFSNAFVLVAACISSVLA. Plastocyanin-like domains lie at 21–145, 157–305, and 375–488; these read TKTF…FVVY, VDDE…LTLA, and TVPV…FAEA. Positions 82 and 84 each coordinate Cu cation. 2 cysteine pairs are disulfide-bonded: cysteine 103-cysteine 509 and cysteine 135-cysteine 229. N-linked (GlcNAc...) asparagine glycosylation occurs at asparagine 108. Positions 127 and 129 each coordinate Cu cation. Residues asparagine 241 and asparagine 299 are each glycosylated (N-linked (GlcNAc...) asparagine). Residues histidine 417, histidine 420, histidine 422, histidine 470, cysteine 471, histidine 472, and histidine 476 each coordinate Cu cation. A glycan (N-linked (GlcNAc...) asparagine) is linked at asparagine 492.

The protein belongs to the multicopper oxidase family. The cofactor is Cu cation.

The protein resides in the secreted. It catalyses the reaction 4 hydroquinone + O2 = 4 benzosemiquinone + 2 H2O. In terms of biological role, lignin degradation and detoxification of lignin-derived products. The chain is Laccase-2 (lcc2) from Agaricus bisporus (White button mushroom).